A 948-amino-acid chain; its full sequence is MASSIRRGRGAWTRLLSLLLLAAWEVGSGQLRYSVPEEAKHGTFVGRIAQDLGLELEELVPRLFRVASKRHGDLLEVNLQNGILFVNSRIDREELCGRSAECSIHVEVIVDRPLQVFHVEVEVKDINDNPPIFPMTVKTIRFPESRLLDSRFPLEGASDADIGVNALLSYKLSSSEFFFLDIQANDELSESLSLVLGKSLDREETAEVNLLLVATDGGKPELTGTVQILIKVLDVNDNEPTFAQSVYKVKLLENTANGTLVVKLNASDADEGPNSEIVYSLGSDVSSTIQTKFTIDPISGEIRTKGKLDYEEAKSYEIQVTATDKGTPSMSGHCKISLKLVDINDNTPEVSITSLSLPISENASLGTVIALITVSDRDSGTNGHVTCSLTPHVPFKLVSTFKNYYSLVLDSALDRESVSAYELVVTARDGGSPSLWATTSVSIEVADVNDNAPAFAQPEYTVFVKENNPPGCHIFTVSAWDADAQENALVSYSLVERRVGERALSSYVSVHAESGKVYALQPLDHEEVELLQFQVSARDAGVPPLGSNVTLQVFVLDENDNAPALLAPRAGTAAGAVSELVPWSVGAGHVVAKVRAVDADSGYNAWLSYELQLGTGSARIPFRVGLYTGEISTTRALDEADSPRHRLLVLVKDHGEPALTATATVLVSLVESGQAPKASSRAWVGAAGSEATLVDVNVYLIIAICAVSSLLVLTVLLYTALRCSVPPTEGARAPGKPTLVCSSAVGSWSYSQQRRQRVCSGEDPPKTDLMAFSPSLSQGPDSAEEKQLSESEYVGKPRQPNPDWRYSASLRAGMHSSVHLEEAGILRAGPGGPDQQWPTVSSATPEPEAGEVSPPVGAGVNSNSWTFKYGPGNPKQSGPGELPDKFIIPGSPAIISIRQEPTNSQIDKSDFITFGKKEETKKKKKKKKGNKTQEKKEKGNSTTDNSDQ.

The signal sequence occupies residues 1–22 (MASSIRRGRGAWTRLLSLLLLA). The Extracellular segment spans residues 23 to 697 (AWEVGSGQLR…GSEATLVDVN (675 aa)). Cadherin domains lie at 30 to 133 (QLRY…PPIF), 157 to 242 (ASDA…EPTF), 243 to 350 (AQSV…TPEV), 351 to 455 (SITS…APAF), 456 to 565 (AQPE…APAL), and 588 to 678 (GHVV…APKA). N-linked (GlcNAc...) asparagine glycans are attached at residues Asn-257, Asn-265, Asn-362, and Asn-548. A helical membrane pass occupies residues 698 to 718 (VYLIIAICAVSSLLVLTVLLY). Residues 719 to 948 (TALRCSVPPT…GNSTTDNSDQ (230 aa)) lie on the Cytoplasmic side of the membrane. One copy of the PXXP 1 repeat lies at 734–737 (PGKP). The 5 X 4 AA repeats of P-X-X-P stretch occupies residues 734 to 892 (PGKPTLVCSS…PDKFIIPGSP (159 aa)). Disordered stretches follow at residues 754–801 (RRQR…RQPN), 829–854 (GPGG…EVSP), and 868–948 (KYGP…NSDQ). Positions 783 to 795 (AEEKQLSESEYVG) are enriched in basic and acidic residues. PXXP repeat units lie at residues 797–800 (PRQP), 830–833 (PGGP), 871–874 (PGNP), and 889–892 (PGSP). Residues 907 to 921 (DKSDFITFGKKEETK) are compositionally biased toward basic and acidic residues.

The protein resides in the cell membrane. Its function is as follows. Potential calcium-dependent cell-adhesion protein. May be involved in the establishment and maintenance of specific neuronal connections in the brain. The chain is Protocadherin alpha-2 (PCDHA2) from Homo sapiens (Human).